The following is a 202-amino-acid chain: Na(+)-translocating NADH-quinone reductase subunit E (202 aa).

The next 6 membrane-spanning stretches (helical) occupy residues 11-31, 35-55, 81-101, 114-134, 144-164, and 180-200; these read SVFI…FIAI, VETA…TVPA, FLGF…LEML, GIYL…LFMV, VVYG…LAGI, and LGIA…FSGI.

It belongs to the NqrDE/RnfAE family. As to quaternary structure, composed of six subunits; NqrA, NqrB, NqrC, NqrD, NqrE and NqrF.

It is found in the cell inner membrane. The enzyme catalyses a ubiquinone + n Na(+)(in) + NADH + H(+) = a ubiquinol + n Na(+)(out) + NAD(+). Functionally, NQR complex catalyzes the reduction of ubiquinone-1 to ubiquinol by two successive reactions, coupled with the transport of Na(+) ions from the cytoplasm to the periplasm. NqrA to NqrE are probably involved in the second step, the conversion of ubisemiquinone to ubiquinol. This is Na(+)-translocating NADH-quinone reductase subunit E from Azotobacter vinelandii (strain DJ / ATCC BAA-1303).